Consider the following 268-residue polypeptide: Thiazole synthase (268 aa).

The active-site Schiff-base intermediate with DXP is the K96. 1-deoxy-D-xylulose 5-phosphate-binding positions include G157, 185-186 (AG), and 207-208 (NT). The interval 238–268 (PMRPREAASPSSPVEGVPFTPTGPRPGRGPQ) is disordered. The span at 258–268 (PTGPRPGRGPQ) shows a compositional bias: pro residues.

This sequence belongs to the ThiG family. Homotetramer. Forms heterodimers with either ThiH or ThiS.

The protein localises to the cytoplasm. It carries out the reaction [ThiS sulfur-carrier protein]-C-terminal-Gly-aminoethanethioate + 2-iminoacetate + 1-deoxy-D-xylulose 5-phosphate = [ThiS sulfur-carrier protein]-C-terminal Gly-Gly + 2-[(2R,5Z)-2-carboxy-4-methylthiazol-5(2H)-ylidene]ethyl phosphate + 2 H2O + H(+). Its pathway is cofactor biosynthesis; thiamine diphosphate biosynthesis. Its function is as follows. Catalyzes the rearrangement of 1-deoxy-D-xylulose 5-phosphate (DXP) to produce the thiazole phosphate moiety of thiamine. Sulfur is provided by the thiocarboxylate moiety of the carrier protein ThiS. In vitro, sulfur can be provided by H(2)S. The chain is Thiazole synthase from Thermus thermophilus (strain ATCC BAA-163 / DSM 7039 / HB27).